Here is a 235-residue protein sequence, read N- to C-terminus: 7-cyano-7-deazaguanine synthase (235 aa).

13 to 23 (FSGGLDSTTCL) is a binding site for ATP. Zn(2+) contacts are provided by Cys-197, Cys-207, Cys-210, and Cys-213.

This sequence belongs to the QueC family. The cofactor is Zn(2+).

The catalysed reaction is 7-carboxy-7-deazaguanine + NH4(+) + ATP = 7-cyano-7-deazaguanine + ADP + phosphate + H2O + H(+). The protein operates within purine metabolism; 7-cyano-7-deazaguanine biosynthesis. Functionally, catalyzes the ATP-dependent conversion of 7-carboxy-7-deazaguanine (CDG) to 7-cyano-7-deazaguanine (preQ(0)). This chain is 7-cyano-7-deazaguanine synthase, found in Solidesulfovibrio magneticus (strain ATCC 700980 / DSM 13731 / RS-1) (Desulfovibrio magneticus).